A 167-amino-acid polypeptide reads, in one-letter code: D-aminoacyl-tRNA deacylase 2 (167 aa).

The Gly-transPro motif, allows the protein to recognize chirality of D-amino acids motif lies at 159–160; that stretch reads GP.

The protein belongs to the DTD family. Homodimer.

It is found in the cytoplasm. The catalysed reaction is a D-aminoacyl-tRNA + H2O = a tRNA + a D-alpha-amino acid + H(+). The enzyme catalyses glycyl-tRNA(Ala) + H2O = tRNA(Ala) + glycine + H(+). It carries out the reaction D-tyrosyl-tRNA(Tyr) + H2O = D-tyrosine + tRNA(Tyr). It catalyses the reaction L-alanyl-tRNA(Thr) + H2O = tRNA(Thr) + L-alanine + H(+). Deacylates mischarged D-aminoacyl-tRNAs. Also deacylates mischarged glycyl-tRNA(Ala), protecting cells against glycine mischarging by AlaRS. Probably acts by rejecting L-amino acids from its binding site rather than specific recognition of D-amino acids. Catalyzes the hydrolysis of D-tyrosyl-tRNA(Tyr), has no activity on correctly charged L-tyrosyl-tRNA(Tyr). By recycling D-aminoacyl-tRNA to D-amino acids and free tRNA molecules, this enzyme counteracts the toxicity associated with the formation of D-aminoacyl-tRNA entities in vivo and helps enforce protein L-homochirality. In contrast to DTD1, deacylates L-Ala mischarged on tRNA(Thr)(G4.U69) by alanine-tRNA ligase AARS. Can deacylate L-Ala due to a relaxed specificity for substrate chirality caused by the trans conformation of the Gly-Pro motif in the active site. Also hydrolyzes correctly charged, achiral, glycyl-tRNA(Gly) in vitro, although in vivo EEF1A1/EF-Tu may protect cognate achiral glycyl-tRNA(Gly) from DTD2-mediated deacetylation. This chain is D-aminoacyl-tRNA deacylase 2 (DTD2), found in Gallus gallus (Chicken).